The chain runs to 273 residues: Dermonecrotic toxin LafSicTox-betaIE1 (273 aa).

The active site involves H5. 2 residues coordinate Mg(2+): E25 and D27. The active-site Nucleophile is the H41. 2 cysteine pairs are disulfide-bonded: C45–C51 and C47–C189. D85 is a binding site for Mg(2+). N250 is a glycosylation site (N-linked (GlcNAc...) asparagine).

It belongs to the arthropod phospholipase D family. Class II subfamily. The cofactor is Mg(2+). Expressed by the venom gland.

It localises to the secreted. It catalyses the reaction an N-(acyl)-sphingosylphosphocholine = an N-(acyl)-sphingosyl-1,3-cyclic phosphate + choline. The enzyme catalyses an N-(acyl)-sphingosylphosphoethanolamine = an N-(acyl)-sphingosyl-1,3-cyclic phosphate + ethanolamine. The catalysed reaction is a 1-acyl-sn-glycero-3-phosphocholine = a 1-acyl-sn-glycero-2,3-cyclic phosphate + choline. It carries out the reaction a 1-acyl-sn-glycero-3-phosphoethanolamine = a 1-acyl-sn-glycero-2,3-cyclic phosphate + ethanolamine. In terms of biological role, dermonecrotic toxins cleave the phosphodiester linkage between the phosphate and headgroup of certain phospholipids (sphingolipid and lysolipid substrates), forming an alcohol (often choline) and a cyclic phosphate. This toxin acts on sphingomyelin (SM). It may also act on ceramide phosphoethanolamine (CPE), lysophosphatidylcholine (LPC) and lysophosphatidylethanolamine (LPE), but not on lysophosphatidylserine (LPS), and lysophosphatidylglycerol (LPG). It acts by transphosphatidylation, releasing exclusively cyclic phosphate products as second products. Induces dermonecrosis, hemolysis, increased vascular permeability, edema, inflammatory response, and platelet aggregation. In Loxosceles aff. spinulosa (strain GJB-2008) (Recluse spider), this protein is Dermonecrotic toxin LafSicTox-betaIE1.